Consider the following 376-residue polypeptide: NifS-like protein (376 aa).

Pyridoxal 5'-phosphate-binding positions include 58–59 (SE) and 184–186 (SLN).

It belongs to the class-V pyridoxal-phosphate-dependent aminotransferase family. NifS/IscS subfamily. Pyridoxal 5'-phosphate serves as cofactor.

It is found in the virion. The sequence is that of NifS-like protein from African swine fever virus (isolate Tick/Malawi/Lil 20-1/1983) (ASFV).